A 453-amino-acid polypeptide reads, in one-letter code: MITLKEALKYSKEELENLKKELNEKAKKEKKLGAYIEQFLDKDLSVSGEGVPVAIKDNISVKGWELTSASKILQGYIAPYDASAIVNLKANGFSPFGRCNMDEFAMGSSTASSCYGKTLNPLNFERVPGGSSGGSAAAVAGGLALASLGSDTGGSVRQPAAFCGCVGFKPSYGRVSRYGLASYSSSLDQIGVLTQNVEDAAILYDAIAGYDKMDSTSANIEFIKTVPNLNANKKLKIAVIENYVNDADSEVKNALLKTIDMLKANGHEIVYKNLLDSKFDIAAYYIIATAEASANLSRYDGVRYGKRSENIQNLKEMYVNTRSEGFGEEVKRRILLGTFVLSSGYYDAYYIKAQKARAFIKAKYEEILQDCDLIFMPVTPTTAFKFDTQKSPMQTYLEDVYTISVNLAGLGGISVPVAKDKEGLNISAQLICKAYDEQTLLDGALSLEQMIKN.

Active-site charge relay system residues include Lys56 and Ser131. Residue Ser155 is the Acyl-ester intermediate of the active site.

Belongs to the amidase family. GatA subfamily. In terms of assembly, heterotrimer of A, B and C subunits.

The enzyme catalyses L-glutamyl-tRNA(Gln) + L-glutamine + ATP + H2O = L-glutaminyl-tRNA(Gln) + L-glutamate + ADP + phosphate + H(+). Allows the formation of correctly charged Gln-tRNA(Gln) through the transamidation of misacylated Glu-tRNA(Gln) in organisms which lack glutaminyl-tRNA synthetase. The reaction takes place in the presence of glutamine and ATP through an activated gamma-phospho-Glu-tRNA(Gln). This chain is Glutamyl-tRNA(Gln) amidotransferase subunit A (gatA), found in Campylobacter jejuni subsp. jejuni serotype O:2 (strain ATCC 700819 / NCTC 11168).